The following is a 398-amino-acid chain: Bifunctional enzyme IspD/IspF (398 aa).

The 2-C-methyl-D-erythritol 4-phosphate cytidylyltransferase stretch occupies residues 1-234; it reads MAKSQRTAVV…ARLAAQLGDI (234 aa). Residues 235–398 are 2-C-methyl-D-erythritol 2,4-cyclodiphosphate synthase; that stretch reads RTGTGYDVHA…LPFNEKTWSV (164 aa). The a divalent metal cation site is built by Asp241 and His243. Residues 241–243 and 267–268 each bind 4-CDP-2-C-methyl-D-erythritol 2-phosphate; these read DVH and HS. A divalent metal cation is bound at residue His275. Residues 289-291, 365-368, Phe372, and Arg375 contribute to the 4-CDP-2-C-methyl-D-erythritol 2-phosphate site; these read DIG and TTSE.

This sequence in the N-terminal section; belongs to the IspD/TarI cytidylyltransferase family. IspD subfamily. The protein in the C-terminal section; belongs to the IspF family. The cofactor is a divalent metal cation.

It carries out the reaction 2-C-methyl-D-erythritol 4-phosphate + CTP + H(+) = 4-CDP-2-C-methyl-D-erythritol + diphosphate. The catalysed reaction is 4-CDP-2-C-methyl-D-erythritol 2-phosphate = 2-C-methyl-D-erythritol 2,4-cyclic diphosphate + CMP. Its pathway is isoprenoid biosynthesis; isopentenyl diphosphate biosynthesis via DXP pathway; isopentenyl diphosphate from 1-deoxy-D-xylulose 5-phosphate: step 2/6. It functions in the pathway isoprenoid biosynthesis; isopentenyl diphosphate biosynthesis via DXP pathway; isopentenyl diphosphate from 1-deoxy-D-xylulose 5-phosphate: step 4/6. In terms of biological role, bifunctional enzyme that catalyzes the formation of 4-diphosphocytidyl-2-C-methyl-D-erythritol from CTP and 2-C-methyl-D-erythritol 4-phosphate (MEP) (IspD), and catalyzes the conversion of 4-diphosphocytidyl-2-C-methyl-D-erythritol 2-phosphate (CDP-ME2P) to 2-C-methyl-D-erythritol 2,4-cyclodiphosphate (ME-CPP) with a corresponding release of cytidine 5-monophosphate (CMP) (IspF). In Bradyrhizobium diazoefficiens (strain JCM 10833 / BCRC 13528 / IAM 13628 / NBRC 14792 / USDA 110), this protein is Bifunctional enzyme IspD/IspF.